The chain runs to 257 residues: MSINDKPIGFFDSGVGGISVLKEAFKLLPKEDFLYYGDSKNAPYGTKKVEEVKALTSNATDFLMNKGIKALVVACNTATSVTINDLRENYDIPIIGIEPALKPAVELKKGGKIIIMATPMTLAEKKFANLMDLYKETEDIEPLPCPGLPELIEQGIVSGDIIYNYLKDKFSKYDNEKISSIVLGCTHYPFIEETLKEVTHNKACIIDGSFGTSRELKRQLKNSNMLREENRVGKVTIFNSREDKDIIDLSYKLFNMK.

Substrate is bound by residues Asp-12 to Ser-13 and Tyr-44 to Gly-45. Cys-75 functions as the Proton donor/acceptor in the catalytic mechanism. Residue Asn-76–Thr-77 participates in substrate binding. The Proton donor/acceptor role is filled by Cys-185. Residue Thr-186–His-187 participates in substrate binding.

The protein belongs to the aspartate/glutamate racemases family.

It catalyses the reaction L-glutamate = D-glutamate. It functions in the pathway cell wall biogenesis; peptidoglycan biosynthesis. Functionally, provides the (R)-glutamate required for cell wall biosynthesis. The polypeptide is Glutamate racemase (Clostridium botulinum (strain Kyoto / Type A2)).